Here is a 219-residue protein sequence, read N- to C-terminus: N-(5'-phosphoribosyl)anthranilate isomerase (219 aa).

The protein belongs to the TrpF family.

The enzyme catalyses N-(5-phospho-beta-D-ribosyl)anthranilate = 1-(2-carboxyphenylamino)-1-deoxy-D-ribulose 5-phosphate. Its pathway is amino-acid biosynthesis; L-tryptophan biosynthesis; L-tryptophan from chorismate: step 3/5. The sequence is that of N-(5'-phosphoribosyl)anthranilate isomerase from Dehalococcoides mccartyi (strain ATCC BAA-2266 / KCTC 15142 / 195) (Dehalococcoides ethenogenes (strain 195)).